Here is a 506-residue protein sequence, read N- to C-terminus: Trans-cinnamate 4-monooxygenase (506 aa).

A helical transmembrane segment spans residues 3–23 (LLLLEKTLLALFIAATIAVTI). (E)-cinnamate contacts are provided by residues 213-218 (RSRLAQ) and alanine 307. Position 448 (cysteine 448) interacts with heme.

Belongs to the cytochrome P450 family. Heme serves as cofactor.

The protein resides in the membrane. It carries out the reaction (E)-cinnamate + reduced [NADPH--hemoprotein reductase] + O2 = (E)-4-coumarate + oxidized [NADPH--hemoprotein reductase] + H2O + H(+). It participates in phenylpropanoid metabolism; trans-4-coumarate biosynthesis; trans-4-coumarate from trans-cinnamate: step 1/1. Catalyzes the first oxidative step of the phenylpropanoid pathway in higher plants by transforming trans-cinnamate into p-coumarate. The compounds formed by this pathway are essential components for lignification, pollination, and defense against ultraviolet light, predators and pathogens. In Medicago sativa (Alfalfa), this protein is Trans-cinnamate 4-monooxygenase (CYP73A3).